We begin with the raw amino-acid sequence, 381 residues long: Alkanesulfonate monooxygenase (381 aa).

It belongs to the SsuD family. As to quaternary structure, homotetramer.

The catalysed reaction is an alkanesulfonate + FMNH2 + O2 = an aldehyde + FMN + sulfite + H2O + 2 H(+). Catalyzes the desulfonation of aliphatic sulfonates. The chain is Alkanesulfonate monooxygenase from Shigella flexneri.